Consider the following 460-residue polypeptide: Cysteine--tRNA ligase (460 aa).

A Zn(2+)-binding site is contributed by cysteine 28. Residues 30–40 (MTVYDYCHLGH) carry the 'HIGH' region motif. Zn(2+) is bound by residues cysteine 209, histidine 234, and glutamate 238. Residues 266–270 (KMSKS) carry the 'KMSKS' region motif. Lysine 269 contributes to the ATP binding site.

This sequence belongs to the class-I aminoacyl-tRNA synthetase family. Monomer. Zn(2+) serves as cofactor.

The protein localises to the cytoplasm. The catalysed reaction is tRNA(Cys) + L-cysteine + ATP = L-cysteinyl-tRNA(Cys) + AMP + diphosphate. The sequence is that of Cysteine--tRNA ligase from Pseudomonas putida (strain GB-1).